Reading from the N-terminus, the 563-residue chain is NADPH oxidase 1 (563 aa).

The Cytoplasmic portion of the chain corresponds to 1–8; sequence MGNWLVNH. Residues 9–31 form a helical membrane-spanning segment; that stretch reads WLSVLFLVSWLGLNIFLFVYVFL. Over 32 to 44 the chain is Extracellular; sequence NYEKSDKYYYTRE. Residues 45 to 69 form a helical membrane-spanning segment; sequence ILGTALALARASALCLNFNSMVILI. A Ferric oxidoreductase domain is found at 54-282; it reads RASALCLNFN…LAPIAFYIFE (229 aa). Over 70-102 the chain is Cytoplasmic; the sequence is PVCRNLLSFLRGTCSFCNHTLRKPLDHNLTFHK. Residues histidine 101 and histidine 115 each contribute to the heme site. The chain crosses the membrane as a helical span at residues 103–123; the sequence is LVAYMICIFTAIHIIAHLFNF. Over 124–167 the chain is Extracellular; the sequence is ERYSRSQQAMDGSLASVLSSLFHPEKEDSWLNPIQSPNVTVMYA. N-linked (GlcNAc...) asparagine glycosylation occurs at asparagine 161. Residues 168–188 traverse the membrane as a helical segment; sequence AFTSIAGLTGVVATVALVLMV. Topologically, residues 189-206 are cytoplasmic; it reads TSAMEFIRRNYFELFWYT. Residues 207–227 traverse the membrane as a helical segment; it reads HHLFIIYIICLGIHGLGGIVR. Heme-binding residues include histidine 208 and histidine 220. The Extracellular portion of the chain corresponds to 228 to 395; sequence GQTEESMSES…TVSEDVFQYE (168 aa). A glycan (N-linked (GlcNAc...) asparagine) is linked at asparagine 241. One can recognise an FAD-binding FR-type domain in the interval 283–390; it reads RILRFYRSRQ…DGPFGTVSED (108 aa). 337 to 343 provides a ligand contact to FAD; that stretch reads HPFTLTS. Residues 396-416 traverse the membrane as a helical segment; that stretch reads VAVLVGAGIGVTPFASFLKSI. The interval 396-535 is interaction with NOXO1; sequence VAVLVGAGIG…GVFLCGPPTL (140 aa). Topologically, residues 417–563 are cytoplasmic; sequence WYKFQRAHNK…VQFYFNKETF (147 aa). The residue at position 429 (threonine 429) is a Phosphothreonine; by PKC/PRKCB.

As to quaternary structure, NOX1, NOXA1, NOXO1, RAC1 and CYBA forms a functional multimeric complex supporting ROS production. Interacts with NOXO1. Interacts (via FAD-binding FR-type domain) with ARHGEF7 (via PH domain). The phosphorylated form at Thr-429 interacts with NOXA1 with greater affinity. The cofactor is FAD. In terms of processing, phosphorylation at Thr-429 mediated by PKC/PRKBC positively regulates its interaction with NOXA1 and enzyme activity. In terms of tissue distribution, expressed in vascular smooth muscle cells.

The protein localises to the cell projection. Its subcellular location is the invadopodium membrane. The protein resides in the cell membrane. The catalysed reaction is NADPH + 2 O2 = 2 superoxide + NADP(+) + H(+). The oxidase activity is potentiated by NOXA1 and NOXO1. NADPH oxidase that catalyzes the generation of superoxide from molecular oxygen utilizing NADPH as an electron donor. This chain is NADPH oxidase 1 (Nox1), found in Rattus norvegicus (Rat).